The following is a 609-amino-acid chain: Alpha-glycerophosphate oxidase (609 aa).

21–49 (DVLIIGGGITGAGVAVQTAAAGMKTVLLE) contacts FAD.

FAD is required as a cofactor.

The protein localises to the cytoplasm. The enzyme catalyses sn-glycerol 3-phosphate + O2 = dihydroxyacetone phosphate + H2O2. It participates in membrane lipid metabolism; glycerophospholipid metabolism. This Enterococcus casseliflavus (Enterococcus flavescens) protein is Alpha-glycerophosphate oxidase (glpO).